The sequence spans 143 residues: Large ribosomal subunit protein uL11 (143 aa).

Belongs to the universal ribosomal protein uL11 family. As to quaternary structure, part of the ribosomal stalk of the 50S ribosomal subunit. Interacts with L10 and the large rRNA to form the base of the stalk. L10 forms an elongated spine to which L12 dimers bind in a sequential fashion forming a multimeric L10(L12)X complex. One or more lysine residues are methylated.

In terms of biological role, forms part of the ribosomal stalk which helps the ribosome interact with GTP-bound translation factors. The chain is Large ribosomal subunit protein uL11 from Saccharophagus degradans (strain 2-40 / ATCC 43961 / DSM 17024).